Reading from the N-terminus, the 271-residue chain is Ferric enterobactin transport ATP-binding protein FepC (271 aa).

The ABC transporter domain occupies 8-244; sequence LRGEQLTLGY…ELIERIYGLR (237 aa). 40 to 47 provides a ligand contact to ATP; the sequence is GPNGCGKS.

Belongs to the ABC transporter superfamily. The complex is composed of two ATP-binding proteins (FepC), two transmembrane proteins (FepD and FepG) and a solute-binding protein (FepB).

It localises to the cell inner membrane. It catalyses the reaction Fe(III)-enterobactin(out) + ATP + H2O = Fe(III)-enterobactin(in) + ADP + phosphate + H(+). In terms of biological role, part of the ABC transporter complex FepBDGC involved in ferric enterobactin uptake. Responsible for energy coupling to the transport system. The protein is Ferric enterobactin transport ATP-binding protein FepC (fepC) of Escherichia coli (strain K12).